A 118-amino-acid chain; its full sequence is Large ribosomal subunit protein bL20 (118 aa).

It belongs to the bacterial ribosomal protein bL20 family.

Binds directly to 23S ribosomal RNA and is necessary for the in vitro assembly process of the 50S ribosomal subunit. It is not involved in the protein synthesizing functions of that subunit. This is Large ribosomal subunit protein bL20 from Methylibium petroleiphilum (strain ATCC BAA-1232 / LMG 22953 / PM1).